Reading from the N-terminus, the 298-residue chain is NADH-cytochrome b5 reductase 2 (298 aa).

Residues 15–38 (FVLPVAAAAVGLASYSFTSSSFIA) form a helical membrane-spanning segment. The FAD-binding FR-type domain maps to 49–153 (DEWIDLKLIS…KGPFVKWKWE (105 aa)). Residue 156–191 (QFKSIALIGGGTGITPLYQLIHEITKNPADKTQVSL) coordinates FAD.

The protein belongs to the flavoprotein pyridine nucleotide cytochrome reductase family. It depends on FAD as a cofactor.

Its subcellular location is the mitochondrion outer membrane. The enzyme catalyses 2 Fe(III)-[cytochrome b5] + NADH = 2 Fe(II)-[cytochrome b5] + NAD(+) + H(+). Functionally, may mediate the reduction of outer membrane cytochrome b5. This chain is NADH-cytochrome b5 reductase 2 (MCR1), found in Scheffersomyces stipitis (strain ATCC 58785 / CBS 6054 / NBRC 10063 / NRRL Y-11545) (Yeast).